The primary structure comprises 399 residues: S-adenosylmethionine synthase (399 aa).

Residue 135–140 (GEGSTD) coordinates ATP.

This sequence belongs to the AdoMet synthase 2 family. The cofactor is Mg(2+).

The enzyme catalyses L-methionine + ATP + H2O = S-adenosyl-L-methionine + phosphate + diphosphate. It participates in amino-acid biosynthesis; S-adenosyl-L-methionine biosynthesis; S-adenosyl-L-methionine from L-methionine: step 1/1. Functionally, catalyzes the formation of S-adenosylmethionine from methionine and ATP. This is S-adenosylmethionine synthase (mat) from Archaeoglobus fulgidus (strain ATCC 49558 / DSM 4304 / JCM 9628 / NBRC 100126 / VC-16).